A 411-amino-acid polypeptide reads, in one-letter code: MTHWFHRNPLKATAPVSFNYYGMITGPPASKICNDLRSARTRLLELFTDLSCNPETMKNAADLYFSLLQGFINSVGDSTQESKLRYIQNFKWTDTLQGHVPSAQQDAVFELISMGFNVALWYTKYASRLAGKENITEDEAKEVHRSLKIAAGIFKHLKESHIPKLLTPAEKGRDLEARLIDAYIIQCQAEAQEVTIARAIELKHAPGLIAALAYDTASFYQKADHTLSSLEPAHSAKWRKYLHLKMCFYTAYAYCYHGQTLLASDKCGEAIRSLQEAEKLYAEAEALCKEYGETKGPGPTAKPSGHLFFRKLGSLVKNTLDKCQRENGFIYFQKIPTEAPQLELKANYGLVEPVPFEFPPMSAHWTPEALAAFDLTKRPKDDSVKPKPEEDVKPVKEPDIRPQKDTGCSVS.

One can recognise a BRO1 domain in the interval 90 to 408 (FKWTDTLQGH…DIRPQKDTGC (319 aa)). The span at 375–404 (LTKRPKDDSVKPKPEEDVKPVKEPDIRPQK) shows a compositional bias: basic and acidic residues. The tract at residues 375-411 (LTKRPKDDSVKPKPEEDVKPVKEPDIRPQKDTGCSVS) is disordered. At Cys408 the chain carries Cysteine methyl ester. The S-farnesyl cysteine moiety is linked to residue Cys408. A propeptide spans 409–411 (SVS) (removed in mature form).

This sequence belongs to the BROX family. As to quaternary structure, monomer. Interacts with CHMP4B. Interacts with CHMP5: this interaction allows the recruitment of BROX to cellular membranes. Interacts with SYN2; this interaction promotes SYN2 ubiquitination and facilitates the relaxation of mechanical stress imposed by compressive actin fibers at the rupture site. Farnesylation is required for nuclear envelope localization.

The protein localises to the nucleus membrane. Functionally, nuclear envelope-associated factor that is involved in the nuclear envelope ruptures during interphase (NERDI) repair, where it is locally recruited by CHMP5 and reduces cytoskeletal stress through its action on SYN2 to help reseal the ruptured membrane. This chain is BRO1 domain-containing protein BROX, found in Mus musculus (Mouse).